A 311-amino-acid chain; its full sequence is Formimidoylglutamase (311 aa).

The Mn(2+) site is built by His-130, Asp-155, His-157, Asp-159, Cys-242, and Asp-244.

Belongs to the arginase family. Requires Mn(2+) as cofactor.

The enzyme catalyses N-formimidoyl-L-glutamate + H2O = formamide + L-glutamate. The protein operates within amino-acid degradation; L-histidine degradation into L-glutamate; L-glutamate from N-formimidoyl-L-glutamate (hydrolase route): step 1/1. Functionally, catalyzes the conversion of N-formimidoyl-L-glutamate to L-glutamate and formamide. The chain is Formimidoylglutamase from Staphylococcus aureus (strain bovine RF122 / ET3-1).